We begin with the raw amino-acid sequence, 349 residues long: uncharacterized protein (349 aa).

Residues 17–37 form a helical membrane-spanning segment; the sequence is VIAIVSTGLVFAMTLVLTGLV. The interval 111-131 is disordered; it reads FGAPEHGPGMPRVSDGRAPST. 3 helical membrane passes run 230-250, 284-304, and 308-328; these read AITV…GSVV, VVAL…APLF, and VVVP…IGLL.

Belongs to the ABC-4 integral membrane protein family.

The protein resides in the cell membrane. This is an uncharacterized protein from Mycobacterium bovis (strain ATCC BAA-935 / AF2122/97).